Reading from the N-terminus, the 583-residue chain is Isocitrate dehydrogenase kinase/phosphatase (583 aa).

ATP-binding positions include 315–321 and lysine 336; that span reads APGIRGM. Residue aspartate 371 is part of the active site.

The protein belongs to the AceK family.

Its subcellular location is the cytoplasm. It carries out the reaction L-seryl-[isocitrate dehydrogenase] + ATP = O-phospho-L-seryl-[isocitrate dehydrogenase] + ADP + H(+). Its function is as follows. Bifunctional enzyme which can phosphorylate or dephosphorylate isocitrate dehydrogenase (IDH) on a specific serine residue. This is a regulatory mechanism which enables bacteria to bypass the Krebs cycle via the glyoxylate shunt in response to the source of carbon. When bacteria are grown on glucose, IDH is fully active and unphosphorylated, but when grown on acetate or ethanol, the activity of IDH declines drastically concomitant with its phosphorylation. The polypeptide is Isocitrate dehydrogenase kinase/phosphatase (Salmonella dublin (strain CT_02021853)).